A 176-amino-acid chain; its full sequence is Lipoprotein signal peptidase (176 aa).

4 helical membrane-spanning segments follow: residues 26-46 (LWMA…IVIV), 60-80 (FFNL…ADAG), 82-102 (WQRW…VWLL), and 107-127 (GQKL…GNVV). Residues Asp-137 and Asp-155 contribute to the active site. Residues 147 to 167 (HWPAFNVADCAITVGAVLLIV) form a helical membrane-spanning segment.

Belongs to the peptidase A8 family.

Its subcellular location is the cell inner membrane. The enzyme catalyses Release of signal peptides from bacterial membrane prolipoproteins. Hydrolyzes -Xaa-Yaa-Zaa-|-(S,diacylglyceryl)Cys-, in which Xaa is hydrophobic (preferably Leu), and Yaa (Ala or Ser) and Zaa (Gly or Ala) have small, neutral side chains.. The protein operates within protein modification; lipoprotein biosynthesis (signal peptide cleavage). Functionally, this protein specifically catalyzes the removal of signal peptides from prolipoproteins. The polypeptide is Lipoprotein signal peptidase (Cupriavidus pinatubonensis (strain JMP 134 / LMG 1197) (Cupriavidus necator (strain JMP 134))).